The chain runs to 615 residues: DNA mismatch repair protein MutL (615 aa).

The tract at residues 363-397 (FAEPAAREPVAPRYTPAPASGSRPAAPWPNAQPGY) is disordered. Positions 364 to 391 (AEPAAREPVAPRYTPAPASGSRPAAPWP) are enriched in low complexity.

Belongs to the DNA mismatch repair MutL/HexB family.

In terms of biological role, this protein is involved in the repair of mismatches in DNA. It is required for dam-dependent methyl-directed DNA mismatch repair. May act as a 'molecular matchmaker', a protein that promotes the formation of a stable complex between two or more DNA-binding proteins in an ATP-dependent manner without itself being part of a final effector complex. This Escherichia coli O8 (strain IAI1) protein is DNA mismatch repair protein MutL.